We begin with the raw amino-acid sequence, 233 residues long: LexA repressor (233 aa).

The H-T-H motif DNA-binding region spans 26–46 (FDEMKDALDLRSKSGIHRLIT). Catalysis depends on for autocatalytic cleavage activity residues S154 and K192.

This sequence belongs to the peptidase S24 family. As to quaternary structure, homodimer.

It carries out the reaction Hydrolysis of Ala-|-Gly bond in repressor LexA.. Its function is as follows. Represses a number of genes involved in the response to DNA damage (SOS response), including recA and lexA. In the presence of single-stranded DNA, RecA interacts with LexA causing an autocatalytic cleavage which disrupts the DNA-binding part of LexA, leading to derepression of the SOS regulon and eventually DNA repair. The chain is LexA repressor from Nitrobacter hamburgensis (strain DSM 10229 / NCIMB 13809 / X14).